The following is a 112-amino-acid chain: MSTVGELACSYAVMILEDEGIAITADKIATLVKAAGVSIESYWPMLFAKMAEKRNVTDLIMNVGAGGGGGAPVAAAAPAAGGGAAAAPAAEEKKKDEPAEESDGDLGFGLFD.

The segment at 85–112 (AAAPAAEEKKKDEPAEESDGDLGFGLFD) is disordered. A Phosphoserine modification is found at Ser102.

It belongs to the eukaryotic ribosomal protein P1/P2 family. In terms of assembly, P1 and P2 exist as dimers at the large ribosomal subunit.

Its function is as follows. Plays an important role in the elongation step of protein synthesis. This is Large ribosomal subunit protein P1w (RPP1A) from Arabidopsis thaliana (Mouse-ear cress).